We begin with the raw amino-acid sequence, 457 residues long: Multidrug resistance protein MdtK (457 aa).

Helical transmembrane passes span 11 to 31, 53 to 73, 93 to 113, 127 to 147, 160 to 180, 188 to 208, 243 to 263, 276 to 296, 314 to 334, 350 to 370, 387 to 407, and 418 to 438; these read LLAL…MGFV, IWLP…PVIA, WLAG…GYII, AVGY…FQVA, GMVM…IFIY, LGGI…FIAM, LPIA…ALLV, IALN…AAVT, AART…IFTV, VVAL…SDSI, IFFI…YILA, and PAGF…LMML.

This sequence belongs to the multi antimicrobial extrusion (MATE) (TC 2.A.66.1) family. MdtK subfamily.

The protein resides in the cell inner membrane. Multidrug efflux pump that functions probably as a Na(+)/drug antiporter. In Salmonella newport (strain SL254), this protein is Multidrug resistance protein MdtK.